We begin with the raw amino-acid sequence, 406 residues long: 3-oxoacyl-[acyl-carrier-protein] synthase 1 (406 aa).

One can recognise a Ketosynthase family 3 (KS3) domain in the interval 1–403 (MKRAVITGLG…GTNATLVMRK (403 aa)). Active-site for beta-ketoacyl synthase activity residues include C163, H298, and H333.

It belongs to the thiolase-like superfamily. Beta-ketoacyl-ACP synthases family. In terms of assembly, homodimer.

It is found in the cytoplasm. It carries out the reaction a fatty acyl-[ACP] + malonyl-[ACP] + H(+) = a 3-oxoacyl-[ACP] + holo-[ACP] + CO2. The catalysed reaction is (3Z)-decenoyl-[ACP] + malonyl-[ACP] + H(+) = 3-oxo-(5Z)-dodecenoyl-[ACP] + holo-[ACP] + CO2. It participates in lipid metabolism; fatty acid biosynthesis. In terms of biological role, involved in the type II fatty acid elongation cycle. Catalyzes the elongation of a wide range of acyl-ACP by the addition of two carbons from malonyl-ACP to an acyl acceptor. Can also use unsaturated fatty acids. Catalyzes a key reaction in unsaturated fatty acid (UFA) synthesis, the elongation of the cis-3-decenoyl-ACP produced by FabA. The chain is 3-oxoacyl-[acyl-carrier-protein] synthase 1 (fabB) from Escherichia coli O6:H1 (strain CFT073 / ATCC 700928 / UPEC).